Reading from the N-terminus, the 335-residue chain is Nucleoid-associated protein PputGB1_0980 (335 aa).

Belongs to the YejK family.

The protein localises to the cytoplasm. Its subcellular location is the nucleoid. This chain is Nucleoid-associated protein PputGB1_0980, found in Pseudomonas putida (strain GB-1).